The sequence spans 247 residues: GTP cyclohydrolase 1 type 2 homolog (247 aa).

The a divalent metal cation site is built by His63, His64, Asp101, His215, and Glu219.

This sequence belongs to the GTP cyclohydrolase I type 2/NIF3 family. Homohexamer.

The sequence is that of GTP cyclohydrolase 1 type 2 homolog from Buchnera aphidicola subsp. Acyrthosiphon pisum (strain APS) (Acyrthosiphon pisum symbiotic bacterium).